The chain runs to 250 residues: MNTRASNFLAASFSTIMLVGAFSLPAFAQENQMTTQPARIAVTGEGMMTASPDMAILNLSVLRQAKTAREAMTANNEAMTKVLDAMKKAGIEDRDLQTGGINIQPIYVYPDDKNNLKEPTITGYSVSTSLTVRVRELANVGKILDESVTLGVNQGGDLNLVNDNPSAVINEARKRAVANAIAKAKTLADAAGVGLGRVVEISELSRPPMPMPIARGQFRTMLAAAPDNSVPIAAGENSYNVSVNVVFEIK.

Residues 1 to 28 form the signal peptide; sequence MNTRASNFLAASFSTIMLVGAFSLPAFA.

The protein resides in the periplasm. This Brucella melitensis biotype 1 (strain ATCC 23456 / CCUG 17765 / NCTC 10094 / 16M) protein is 26 kDa periplasmic immunogenic protein (bp26).